We begin with the raw amino-acid sequence, 141 residues long: VLSGEDKNNIKTAWGKIGGHAAEYGAEALERMFVVYPTTKTYFPHFDVSHGSGQVKAHGKKVADALTTAVGHLDDLPGALSALSDLHAHKLRVDPVNFKLLSHCLLVTLANHIPADFTPAVHASLDKFLASVSTVLTSKYR.

The region spanning 1–141 is the Globin domain; sequence VLSGEDKNNI…VSTVLTSKYR (141 aa). Ser-3 carries the post-translational modification Phosphoserine. N6-succinyllysine is present on residues Lys-7 and Lys-11. Lys-16 bears the N6-acetyllysine; alternate mark. An N6-succinyllysine; alternate modification is found at Lys-16. Tyr-24 is modified (phosphotyrosine). At Lys-40 the chain carries N6-succinyllysine. Ser-49 bears the Phosphoserine mark. Residue His-58 participates in O2 binding. His-87 is a binding site for heme b. Position 102 is a phosphoserine (Ser-102). Thr-108 is modified (phosphothreonine). Phosphoserine is present on residues Ser-124 and Ser-131. Residues Thr-134 and Thr-137 each carry the phosphothreonine modification. Ser-138 bears the Phosphoserine mark.

The protein belongs to the globin family. As to quaternary structure, heterotetramer of two alpha chains and two beta chains. As to expression, red blood cells.

In terms of biological role, involved in oxygen transport from the lung to the various peripheral tissues. Hemopressin acts as an antagonist peptide of the cannabinoid receptor CNR1. Hemopressin-binding efficiently blocks cannabinoid receptor CNR1 and subsequent signaling. The protein is Hemoglobin subunit alpha (HBA) of Ondatra zibethicus (Muskrat).